Reading from the N-terminus, the 204-residue chain is Proteasome subunit beta (204 aa).

A propeptide spans 1-8 (MDDKILEG) (removed in mature form; by autocatalysis). Thr-9 (nucleophile) is an active-site residue.

Belongs to the peptidase T1B family. In terms of assembly, the 20S proteasome core is composed of 14 alpha and 14 beta subunits that assemble into four stacked heptameric rings, resulting in a barrel-shaped structure. The two inner rings, each composed of seven catalytic beta subunits, are sandwiched by two outer rings, each composed of seven alpha subunits. The catalytic chamber with the active sites is on the inside of the barrel. Has a gated structure, the ends of the cylinder being occluded by the N-termini of the alpha-subunits. Is capped at one or both ends by the proteasome regulatory ATPase, PAN.

Its subcellular location is the cytoplasm. It carries out the reaction Cleavage of peptide bonds with very broad specificity.. Its activity is regulated as follows. The formation of the proteasomal ATPase PAN-20S proteasome complex, via the docking of the C-termini of PAN into the intersubunit pockets in the alpha-rings, triggers opening of the gate for substrate entry. Interconversion between the open-gate and close-gate conformations leads to a dynamic regulation of the 20S proteasome proteolysis activity. Its function is as follows. Component of the proteasome core, a large protease complex with broad specificity involved in protein degradation. This chain is Proteasome subunit beta, found in Methanobrevibacter smithii (strain ATCC 35061 / DSM 861 / OCM 144 / PS).